The chain runs to 793 residues: WASP homolog-associated protein with actin, membranes and microtubules (793 aa).

A mediates association with membranes region spans residues 1-253 (MDSEQPDSLD…EVATSCKLGI (253 aa)). The interval 254-623 (LKSLDEDELG…FVPVSDQTLS (370 aa)) is mediates interaction with microtubules. Coiled coils occupy residues 265-290 (RRVA…SIQD) and 445-503 (LGDN…LHQH). 2 disordered regions span residues 556–661 (SMVS…SFQG) and 675–699 (EDRP…PGSM). Positions 566 to 579 (SQKRLSTAHHHKTA) are enriched in basic residues. Positions 618-628 (SDQTLSGSSED) are enriched in polar residues. The mediates actin nucleation stretch occupies residues 624–793 (GSSEDLSLPP…DEPSPTEWDR (170 aa)). Positions 632–654 (PPQPPAPPLPPPPPPPPPPPLPP) are enriched in pro residues. WH2 domains are found at residues 698-716 (SMDE…LRKV) and 728-745 (VNEQ…LKKV). The stretch at 755–785 (KKSTSDLERSIREALERIKKVSADSEEDNDE) forms a coiled coil. The segment at 772-793 (IKKVSADSEEDNDEPSPTEWDR) is disordered. Positions 778–787 (DSEEDNDEPS) are enriched in acidic residues. A Phosphoserine modification is found at S779.

In terms of assembly, interacts with ACTR3; indicative for an association with the ARP2/3 complex. Associates with microtubules; in vitro binds to tubulin heterodimer in a 1:1 stoichiometry; decorates microtubules with a repeat of 80 A along protofilaments. Interacts with RHOD (in GTP-bound form).

The protein localises to the cytoplasm. The protein resides in the endoplasmic reticulum-Golgi intermediate compartment. It is found in the cytoplasmic vesicle membrane. Its subcellular location is the golgi apparatus. It localises to the cis-Golgi network. Functionally, acts as a nucleation-promoting factor (NPF) that stimulates Arp2/3-mediated actin polymerization both at the Golgi apparatus and along tubular membranes. Involved as a regulator of Golgi positioning and morphology. Its activity in membrane tubulation requires F-actin and interaction with microtubules. Proposed to use coordinated actin-nucleating and microtubule-binding activities of distinct WHAMM molecules to drive membrane tubule elongation; when MT-bound can recruit and remodel membrane vesicles but is prevented to activate the Arp2/3 complex. Required for RhoD-dependent actin reorganization such as in cell adhesion and cell migration. Participates in vesicle transport between the endoplasmic reticulum and the Golgi complex. This Mus musculus (Mouse) protein is WASP homolog-associated protein with actin, membranes and microtubules (Whamm).